Reading from the N-terminus, the 468-residue chain is Mitochondrial adenyl nucleotide antiporter SLC25A23 (468 aa).

Residues Met1–Asn149 form a regulatory N-terminal domain region. At Met1–Gln188 the chain is on the mitochondrial intermembrane side. Residues Glu9–Gly44 form the EF-hand 1 domain. 5 residues coordinate Ca(2+): Asp22, Asn24, Asp26, Arg28, and Glu33. A disordered region spans residues Leu34–Asp67. A compositionally biased stretch (acidic residues) spans Gly58–Asp67. EF-hand domains lie at Glu77 to Ser112 and Ile113 to Glu148. Residues Asp90, Asn92, Asp94, His96, and Glu101 each contribute to the Ca(2+) site. Residues Val150–His159 form a linker region region. A C-terminal transmembrane transporter domain region spans residues Ile165 to Arg468. 3 Solcar repeats span residues Gly183 to Ala269, Leu277 to Trp362, and Pro374 to Ala462. Residues Leu189–Leu206 traverse the membrane as a helical segment. Residues Asp207–Arg243 lie on the Mitochondrial matrix side of the membrane. A helical transmembrane segment spans residues Gly244–Tyr263. Topologically, residues Glu264 to Gly286 are mitochondrial intermembrane. Residues Ser287–Met300 traverse the membrane as a helical segment. Topologically, residues Glu301–Arg336 are mitochondrial matrix. The helical transmembrane segment at Gly337 to Tyr356 threads the bilayer. Residues Glu357–Leu379 are Mitochondrial intermembrane-facing. Residues Leu380–Leu397 form a helical membrane-spanning segment. The Mitochondrial matrix portion of the chain corresponds to Ala398 to Arg436. A helical transmembrane segment spans residues Gly437–Tyr456. The Mitochondrial intermembrane portion of the chain corresponds to Glu457–Arg468.

It belongs to the mitochondrial carrier (TC 2.A.29) family. As to quaternary structure, interacts with MCU. Interacts with MICU1. Expressed at low levels in most tissues examined, with highest expression in brain, skeletal muscle and pancreas.

The protein resides in the mitochondrion inner membrane. It catalyses the reaction Mg(2+)(out) + phosphate(in) + ATP(out) = Mg(2+)(in) + phosphate(out) + ATP(in). The enzyme catalyses ADP(out) + phosphate(in) + H(+)(out) = ADP(in) + phosphate(out) + H(+)(in). The catalysed reaction is AMP(out) + phosphate(in) = AMP(in) + phosphate(out). It carries out the reaction phosphate(in) + ATP(out) + 2 H(+)(out) = phosphate(out) + ATP(in) + 2 H(+)(in). It catalyses the reaction dADP(in) + ADP(out) = dADP(out) + ADP(in). The enzyme catalyses Mg(2+)(in) + ADP(out) + ATP(in) + H(+)(out) = Mg(2+)(out) + ADP(in) + ATP(out) + H(+)(in). The catalysed reaction is ADP(out) + diphosphate(in) = ADP(in) + diphosphate(out). It carries out the reaction dAMP(in) + ADP(out) + H(+)(out) = dAMP(out) + ADP(in) + H(+)(in). It catalyses the reaction 3'-AMP(in) + ADP(out) + H(+)(out) = 3'-AMP(out) + ADP(in) + H(+)(in). The enzyme catalyses dAMP(out) + phosphate(in) = dAMP(in) + phosphate(out). The catalysed reaction is 3'-AMP(out) + phosphate(in) = 3'-AMP(in) + phosphate(out). It carries out the reaction dADP(out) + phosphate(in) + H(+)(out) = dADP(in) + phosphate(out) + H(+)(in). Its activity is regulated as follows. Activated by an increase in cytosolic calcium levels that induce a conformational change of the N-terminal regulatory domain, uncapping the channel and allowing transport. Inhibited by bathophenanthroline, mersalyl, p-hydroxymercuribenzoate, bromcresol purple, tannic acid, pyridoxal 5'-phosphate and p-hydroxymercuribenzoate. Its function is as follows. Electroneutral antiporter that mediates the transport of adenine nucleotides through the inner mitochondrial membrane. Originally identified as an ATP-magnesium/inorganic phosphate antiporter, it also acts as a broad specificity adenyl nucleotide antiporter. By regulating the mitochondrial matrix adenine nucleotide pool could adapt to changing cellular energetic demands and indirectly regulate adenine nucleotide-dependent metabolic pathways. Also acts as a regulator of mitochondrial calcium uptake and can probably transport trace amounts of other divalent metal cations in complex with ATP. In vitro, a low activity is also observed with guanyl and pyrimidine nucleotides. This Homo sapiens (Human) protein is Mitochondrial adenyl nucleotide antiporter SLC25A23.